A 161-amino-acid chain; its full sequence is Phosphotransferase enzyme IIB component GlvB (161 aa).

The helical transmembrane segment at Leu10–Leu32 threads the bilayer. The PTS EIIB type-1 domain occupies Leu70–Ala152. Cys92 acts as the Phosphocysteine intermediate in catalysis.

The protein localises to the cell inner membrane. The phosphoenolpyruvate-dependent sugar phosphotransferase system (sugar PTS), a major carbohydrate active -transport system, catalyzes the phosphorylation of incoming sugar substrates concomitantly with their translocation across the cell membrane. This operon may be cryptic in wild-type K12 strains. The protein is Phosphotransferase enzyme IIB component GlvB of Escherichia coli (strain K12).